A 279-amino-acid polypeptide reads, in one-letter code: 3-methyl-2-oxobutanoate hydroxymethyltransferase (279 aa).

Residues Asp43 and Asp82 each coordinate Mg(2+). 3-methyl-2-oxobutanoate-binding positions include 43 to 44 (DS), Asp82, and Lys112. Glu114 contributes to the Mg(2+) binding site. The active-site Proton acceptor is the Glu181.

It belongs to the PanB family. In terms of assembly, homodecamer; pentamer of dimers. It depends on Mg(2+) as a cofactor.

The protein localises to the cytoplasm. It carries out the reaction 3-methyl-2-oxobutanoate + (6R)-5,10-methylene-5,6,7,8-tetrahydrofolate + H2O = 2-dehydropantoate + (6S)-5,6,7,8-tetrahydrofolate. The protein operates within cofactor biosynthesis; (R)-pantothenate biosynthesis; (R)-pantoate from 3-methyl-2-oxobutanoate: step 1/2. Catalyzes the reversible reaction in which hydroxymethyl group from 5,10-methylenetetrahydrofolate is transferred onto alpha-ketoisovalerate to form ketopantoate. The chain is 3-methyl-2-oxobutanoate hydroxymethyltransferase from Lysinibacillus sphaericus (strain C3-41).